A 112-amino-acid chain; its full sequence is S-adenosylmethionine decarboxylase proenzyme (112 aa).

Catalysis depends on S62, which acts as the Schiff-base intermediate with substrate; via pyruvic acid. S62 carries the pyruvic acid (Ser); by autocatalysis modification. Catalysis depends on H67, which acts as the Proton acceptor; for processing activity. C82 serves as the catalytic Proton donor; for catalytic activity.

It belongs to the prokaryotic AdoMetDC family. Type 1 subfamily. As to quaternary structure, heterotetramer of two alpha and two beta chains arranged as a dimer of alpha/beta heterodimers. The cofactor is pyruvate. In terms of processing, is synthesized initially as an inactive proenzyme. Formation of the active enzyme involves a self-maturation process in which the active site pyruvoyl group is generated from an internal serine residue via an autocatalytic post-translational modification. Two non-identical subunits are generated from the proenzyme in this reaction, and the pyruvate is formed at the N-terminus of the alpha chain, which is derived from the carboxyl end of the proenzyme. The post-translation cleavage follows an unusual pathway, termed non-hydrolytic serinolysis, in which the side chain hydroxyl group of the serine supplies its oxygen atom to form the C-terminus of the beta chain, while the remainder of the serine residue undergoes an oxidative deamination to produce ammonia and the pyruvoyl group blocking the N-terminus of the alpha chain.

It carries out the reaction S-adenosyl-L-methionine + H(+) = S-adenosyl 3-(methylsulfanyl)propylamine + CO2. Its pathway is amine and polyamine biosynthesis; S-adenosylmethioninamine biosynthesis; S-adenosylmethioninamine from S-adenosyl-L-methionine: step 1/1. In terms of biological role, catalyzes the decarboxylation of S-adenosylmethionine to S-adenosylmethioninamine (dcAdoMet), the propylamine donor required for the synthesis of the polyamines spermine and spermidine from the diamine putrescine. The chain is S-adenosylmethionine decarboxylase proenzyme from Archaeoglobus fulgidus (strain ATCC 49558 / DSM 4304 / JCM 9628 / NBRC 100126 / VC-16).